Consider the following 813-residue polypeptide: Leucine--tRNA ligase (813 aa).

A 'HIGH' region motif is present at residues 41–51 (PYPSGTLHMGH). Positions 575–579 (KMSKS) match the 'KMSKS' region motif. Lysine 578 serves as a coordination point for ATP.

It belongs to the class-I aminoacyl-tRNA synthetase family.

It is found in the cytoplasm. It carries out the reaction tRNA(Leu) + L-leucine + ATP = L-leucyl-tRNA(Leu) + AMP + diphosphate. The sequence is that of Leucine--tRNA ligase from Francisella tularensis subsp. tularensis (strain WY96-3418).